A 322-amino-acid chain; its full sequence is tRNA U34 carboxymethyltransferase (322 aa).

Carboxy-S-adenosyl-L-methionine contacts are provided by residues lysine 90, tryptophan 104, lysine 109, glycine 129, aspartate 151–threonine 153, isoleucine 180–glutamate 181, methionine 195, tyrosine 199, and arginine 314.

The protein belongs to the class I-like SAM-binding methyltransferase superfamily. CmoB family. As to quaternary structure, homotetramer.

The enzyme catalyses carboxy-S-adenosyl-L-methionine + 5-hydroxyuridine(34) in tRNA = 5-carboxymethoxyuridine(34) in tRNA + S-adenosyl-L-homocysteine + H(+). Catalyzes carboxymethyl transfer from carboxy-S-adenosyl-L-methionine (Cx-SAM) to 5-hydroxyuridine (ho5U) to form 5-carboxymethoxyuridine (cmo5U) at position 34 in tRNAs. The protein is tRNA U34 carboxymethyltransferase of Citrobacter koseri (strain ATCC BAA-895 / CDC 4225-83 / SGSC4696).